The following is a 103-amino-acid chain: Urease subunit beta (103 aa).

It belongs to the urease beta subunit family. As to quaternary structure, heterotrimer of UreA (gamma), UreB (beta) and UreC (alpha) subunits. Three heterotrimers associate to form the active enzyme.

It is found in the cytoplasm. It carries out the reaction urea + 2 H2O + H(+) = hydrogencarbonate + 2 NH4(+). The protein operates within nitrogen metabolism; urea degradation; CO(2) and NH(3) from urea (urease route): step 1/1. In Mycobacterium marinum (strain ATCC BAA-535 / M), this protein is Urease subunit beta.